Reading from the N-terminus, the 416-residue chain is UDP-N-acetylglucosamine 1-carboxyvinyltransferase (416 aa).

A phosphoenolpyruvate-binding site is contributed by 22-23; the sequence is KN. Residue arginine 92 participates in UDP-N-acetyl-alpha-D-glucosamine binding. Cysteine 116 acts as the Proton donor in catalysis. Cysteine 116 carries the post-translational modification 2-(S-cysteinyl)pyruvic acid O-phosphothioketal. UDP-N-acetyl-alpha-D-glucosamine-binding positions include 121–125, aspartate 304, and isoleucine 326; that span reads RPVDQ.

The protein belongs to the EPSP synthase family. MurA subfamily.

Its subcellular location is the cytoplasm. The catalysed reaction is phosphoenolpyruvate + UDP-N-acetyl-alpha-D-glucosamine = UDP-N-acetyl-3-O-(1-carboxyvinyl)-alpha-D-glucosamine + phosphate. It participates in cell wall biogenesis; peptidoglycan biosynthesis. Functionally, cell wall formation. Adds enolpyruvyl to UDP-N-acetylglucosamine. The sequence is that of UDP-N-acetylglucosamine 1-carboxyvinyltransferase from Cupriavidus metallidurans (strain ATCC 43123 / DSM 2839 / NBRC 102507 / CH34) (Ralstonia metallidurans).